We begin with the raw amino-acid sequence, 277 residues long: Large ribosomal subunit protein uL2m (277 aa).

The tract at residues 225–263 (AMNPVDHPHGGGEGKTSGGRPSVTPWSWPTKGQPTRSKR) is disordered. Over residues 248–259 (TPWSWPTKGQPT) the composition is skewed to polar residues.

The protein belongs to the universal ribosomal protein uL2 family.

The protein resides in the mitochondrion. The sequence is that of Large ribosomal subunit protein uL2m (RPL2) from Reclinomonas americana.